Reading from the N-terminus, the 347-residue chain is D-alanine--D-alanine ligase (347 aa).

The 203-residue stretch at 131 to 333 (KRVLESAGIA…YPELIERLVD (203 aa)) folds into the ATP-grasp domain. Residue 161-216 (EEKLAYPVFTKPSNMGSSVGISKSENQEELRQALKLAFRYDSRVLVEQGVNAREIE) participates in ATP binding. Asp287, Glu300, and Asn302 together coordinate Mg(2+).

Belongs to the D-alanine--D-alanine ligase family. It depends on Mg(2+) as a cofactor. Requires Mn(2+) as cofactor.

It localises to the cytoplasm. The catalysed reaction is 2 D-alanine + ATP = D-alanyl-D-alanine + ADP + phosphate + H(+). It participates in cell wall biogenesis; peptidoglycan biosynthesis. Functionally, cell wall formation. The sequence is that of D-alanine--D-alanine ligase from Streptococcus pneumoniae serotype 19F (strain G54).